Here is a 143-residue protein sequence, read N- to C-terminus: SsrA-binding protein (143 aa).

Belongs to the SmpB family.

It is found in the cytoplasm. In terms of biological role, required for rescue of stalled ribosomes mediated by trans-translation. Binds to transfer-messenger RNA (tmRNA), required for stable association of tmRNA with ribosomes. tmRNA and SmpB together mimic tRNA shape, replacing the anticodon stem-loop with SmpB. tmRNA is encoded by the ssrA gene; the 2 termini fold to resemble tRNA(Ala) and it encodes a 'tag peptide', a short internal open reading frame. During trans-translation Ala-aminoacylated tmRNA acts like a tRNA, entering the A-site of stalled ribosomes, displacing the stalled mRNA. The ribosome then switches to translate the ORF on the tmRNA; the nascent peptide is terminated with the 'tag peptide' encoded by the tmRNA and targeted for degradation. The ribosome is freed to recommence translation, which seems to be the essential function of trans-translation. The protein is SsrA-binding protein of Mycoplasmopsis synoviae (strain 53) (Mycoplasma synoviae).